Consider the following 155-residue polypeptide: Large ribosomal subunit protein uL22 (155 aa).

This sequence belongs to the universal ribosomal protein uL22 family. In terms of assembly, part of the 50S ribosomal subunit. Contacts the macrolide antibiotic tylosin in the polypeptide exit tunnel.

In terms of biological role, this protein binds specifically to 23S rRNA. It makes multiple contacts with different domains of the 23S rRNA in the assembled 50S subunit and ribosome. Contacts all 6 domains of the 23S rRNA, helping stabilize their relative orientation. An extended beta-hairpin in the C-terminus forms part of the polypeptide exit tunnel, in which it helps forms a bend with protein L4, while most of the rest of the protein is located at the polypeptide exit tunnel on the outside of the subunit. This Haloarcula marismortui (strain ATCC 43049 / DSM 3752 / JCM 8966 / VKM B-1809) (Halobacterium marismortui) protein is Large ribosomal subunit protein uL22.